The chain runs to 434 residues: Trigger factor (434 aa).

The PPIase FKBP-type domain occupies 160–245 (GDKVKMNFVG…LTEVQAANLP (86 aa)).

This sequence belongs to the FKBP-type PPIase family. Tig subfamily.

It is found in the cytoplasm. The catalysed reaction is [protein]-peptidylproline (omega=180) = [protein]-peptidylproline (omega=0). Its function is as follows. Involved in protein export. Acts as a chaperone by maintaining the newly synthesized protein in an open conformation. Functions as a peptidyl-prolyl cis-trans isomerase. This Shewanella sp. (strain W3-18-1) protein is Trigger factor.